Reading from the N-terminus, the 151-residue chain is NPC intracellular cholesterol transporter 2 (151 aa).

The signal sequence occupies residues Met1–Ala19. 3 disulfides stabilise this stretch: Cys27–Cys140, Cys42–Cys47, and Cys93–Cys99. Asn58 carries N-linked (GlcNAc...) asparagine glycosylation. Lys116 carries the post-translational modification N6-acetyllysine. An N-linked (GlcNAc...) asparagine glycan is attached at Asn135.

The protein belongs to the NPC2 family. Interacts with NPC1 (via the second lumenal domain) in a cholestrol-dependent manner. Interacts with NUS1/NgBR, the interaction stabilizes NCP2 and regulates cholesterol trafficking. Interacts with DHDDS. Interacts with NEDD4L (via C2 domain). Interacts with NPC1L1. As to expression, detected in gallbladder bile. Detected in fibroblasts, kidney, liver, spleen, small intestine, placenta and testis (at protein level). Epididymis.

The protein resides in the secreted. It is found in the endoplasmic reticulum. Its subcellular location is the lysosome. The catalysed reaction is cholesterol(in) = cholesterol(out). In terms of biological role, intracellular cholesterol transporter which acts in concert with NPC1 and plays an important role in the egress of cholesterol from the lysosomal compartment. Unesterified cholesterol that has been released from LDLs in the lumen of the late endosomes/lysosomes is transferred by NPC2 to the cholesterol-binding pocket in the N-terminal domain of NPC1. May bind and mobilize cholesterol that is associated with membranes. NPC2 binds cholesterol with a 1:1 stoichiometry. Can bind a variety of sterols, including lathosterol, desmosterol and the plant sterols stigmasterol and beta-sitosterol. The secreted form of NCP2 regulates biliary cholesterol secretion via stimulation of ABCG5/ABCG8-mediated cholesterol transport. This Homo sapiens (Human) protein is NPC intracellular cholesterol transporter 2.